The following is a 136-amino-acid chain: Large ribosomal subunit protein uL16 (136 aa).

Belongs to the universal ribosomal protein uL16 family. Part of the 50S ribosomal subunit.

Functionally, binds 23S rRNA and is also seen to make contacts with the A and possibly P site tRNAs. The polypeptide is Large ribosomal subunit protein uL16 (Ruthia magnifica subsp. Calyptogena magnifica).